The following is a 75-amino-acid chain: DNA-directed RNA polymerase subunit omega (75 aa).

It belongs to the RNA polymerase subunit omega family. As to quaternary structure, in cyanobacteria the RNAP catalytic core is composed of 2 alpha, 1 beta, 1 beta', 1 gamma and 1 omega subunit. When a sigma factor is associated with the core the holoenzyme is formed, which can initiate transcription.

The catalysed reaction is RNA(n) + a ribonucleoside 5'-triphosphate = RNA(n+1) + diphosphate. Promotes RNA polymerase assembly. Latches the N- and C-terminal regions of the beta' subunit thereby facilitating its interaction with the beta and alpha subunits. The sequence is that of DNA-directed RNA polymerase subunit omega from Gloeothece citriformis (strain PCC 7424) (Cyanothece sp. (strain PCC 7424)).